The following is a 113-amino-acid chain: Nucleoid-associated protein SAV_4556 (113 aa).

Belongs to the YbaB/EbfC family. In terms of assembly, homodimer.

The protein resides in the cytoplasm. The protein localises to the nucleoid. Binds to DNA and alters its conformation. May be involved in regulation of gene expression, nucleoid organization and DNA protection. The sequence is that of Nucleoid-associated protein SAV_4556 from Streptomyces avermitilis (strain ATCC 31267 / DSM 46492 / JCM 5070 / NBRC 14893 / NCIMB 12804 / NRRL 8165 / MA-4680).